Consider the following 157-residue polypeptide: Glutathione peroxidase homolog BsaA (157 aa).

The active site involves C35.

This sequence belongs to the glutathione peroxidase family.

The sequence is that of Glutathione peroxidase homolog BsaA (bsaA) from Halalkalibacterium halodurans (strain ATCC BAA-125 / DSM 18197 / FERM 7344 / JCM 9153 / C-125) (Bacillus halodurans).